The chain runs to 202 residues: Ras-related protein RABD2b (202 aa).

GTP contacts are provided by residues 15–23 (GDSGVGKSC), 33–40 (YLDSYIST), 63–67 (DTAGQ), 121–124 (NKND), and 151–153 (SAK). The short motif at 37–45 (YISTIGVDF) is the Effector region element. The interval 174–202 (ASQPAGGAKPPTVQIRGQPVNQQSGCCSS) is disordered. Residues 192–202 (PVNQQSGCCSS) are compositionally biased toward polar residues. 2 S-geranylgeranyl cysteine lipidation sites follow: Cys-199 and Cys-200.

It belongs to the small GTPase superfamily. Rab family.

It localises to the golgi apparatus. The protein resides in the trans-Golgi network membrane. Its subcellular location is the golgi apparatus membrane. Functionally, protein transport. Regulator of membrane traffic from the Golgi apparatus towards the endoplasmic reticulum (ER). In Arabidopsis thaliana (Mouse-ear cress), this protein is Ras-related protein RABD2b (RABD2B).